Here is a 301-residue protein sequence, read N- to C-terminus: Ribonuclease H2 subunit A (301 aa).

N-acetylmethionine is present on Met-1. The RNase H type-2 domain maps to 28–251 (PCVLGVDEAG…AQAILEKEAE (224 aa)). A divalent metal cation contacts are provided by Asp-34, Glu-35, and Asp-142. Thr-217 bears the Phosphothreonine mark. A compositionally biased stretch (acidic residues) spans 255-264 (WEDSEAEEDP). The segment at 255–284 (WEDSEAEEDPERPGKITSYFSQGPQTCRPQ) is disordered. Ser-258 bears the Phosphoserine mark. A compositionally biased stretch (polar residues) spans 272–282 (SYFSQGPQTCR).

The protein belongs to the RNase HII family. Eukaryotic subfamily. In terms of assembly, the RNase H2 complex is a heterotrimer composed of the catalytic subunit RNASEH2A and the non-catalytic subunits RNASEH2B and RNASEH2C. Mn(2+) serves as cofactor. The cofactor is Mg(2+).

The protein resides in the nucleus. The enzyme catalyses Endonucleolytic cleavage to 5'-phosphomonoester.. Catalytic subunit of RNase HII, an endonuclease that specifically degrades the RNA of RNA:DNA hybrids. Participates in DNA replication, possibly by mediating the removal of lagging-strand Okazaki fragment RNA primers during DNA replication. Mediates the excision of single ribonucleotides from DNA:RNA duplexes. The chain is Ribonuclease H2 subunit A (Rnaseh2a) from Mus musculus (Mouse).